The following is a 1044-amino-acid chain: MSKRSADDATGSSCLVAAAAAGQPPIKKVHFEPHLIGPVSTLEEMDIKVLEFQNKKLAQRIEQRMRTEAELRHRIEQLEKRQTQDDAVLNVVNRYWNQLNEDIRVLLQRFDAETADELENRNENEVTTSFLAQLSTWDKEELDEKLANRVQVSKRAVAKIVQVIDRLMQRNEKITHVLKGDSLASAGSGSGAGAGGEEEQQQASGDAETTTSSAGVHALEETLKQTHIEIMSENHKLQNLNTSLHEKFHTMSLKMKEYQDAHTAKETENAELKNQIDELQYDLEKIHCRNDKLENHLAEAIEKLKAYHQIYGDPNKSTNSAKTPTTTGSGGATTSVNSQLLEELQKELEEYRELANNRLQELDKLHATHRETLKEVEKLKMDIRQLPESVIVETTEYKCLQSQFSVLYNESMQIKTMLDETRNQLQTSKNQHLRQIEVMESEELIAQKKVRSEMIQMEDVLALIRKEYETLRIEFEQNMAANEQTAPINREMRHLITSLQNHNGQLKGEVQRYKRKYKDTSTDNLKLRQELADALATLEGNKLQAATGAAGEEIKQENSTGVKEENSNNVSASGQTNQTNSGNDTNVAIKEENHISAEDEADDEASGKDVKDGIKQEKLSSGDAAAAEKKDSPGPGNSTSSATNSVPVKNEKDSKDGVKGKDVKAVESETVRDLKAQLKKALNDQKEMKLLLDMYKGVSKDQRDKVQLMATEKKLRSEIEELRQQLKKLQESKREERKKLADEEALRKIKQLEEQKYELQKQMANHKPTDNSWGSGAPGTANYTRPFVGSHEEEALLNEMEVTGQAFEDMQEQNSRLIQQLREKDDANFKLMSERIKANQLHKLLREEKTVLEDQMATATTQIEAMHIVLRKLEEKERSLQATVASIEKELMLRQQAMEMHKRKAIESAQSAADLKLHLEKYHAQMKEAQQVVAEKTSSLEAEAYKTKRLQEELAQFKRKAERMKKMEMSGTTIDEVMIEEIREYKETLTCPSCKVKRKDAVLSKCFHVFCYDCLRTRYETRQRKCPKCNCAFGANDYHRLYLQ.

A coiled-coil region spans residues 43-81 (EEMDIKVLEFQNKKLAQRIEQRMRTEAELRHRIEQLEKR). The disordered stretch occupies residues 182–214 (SLASAGSGSGAGAGGEEEQQQASGDAETTTSSA). Coiled-coil stretches lie at residues 218-386 (ALEE…IRQL) and 417-546 (MLDE…LQAA). Thr-242 bears the Phosphothreonine mark. The residue at position 243 (Ser-243) is a Phosphoserine. Disordered regions lie at residues 312–335 (GDPNKSTNSAKTPTTTGSGGATTS), 546–586 (ATGA…NDTN), and 615–664 (KQEK…KDVK). The segment covering 320–335 (SAKTPTTTGSGGATTS) has biased composition (low complexity). Residues 552 to 566 (EEIKQENSTGVKEEN) are compositionally biased toward basic and acidic residues. Residues 567 to 586 (SNNVSASGQTNQTNSGNDTN) show a composition bias toward polar residues. Over residues 615–632 (KQEKLSSGDAAAAEKKDS) the composition is skewed to basic and acidic residues. Residues Ser-632 and Ser-638 each carry the phosphoserine modification. Polar residues predominate over residues 635 to 647 (PGNSTSSATNSVP). A compositionally biased stretch (basic and acidic residues) spans 649-664 (KNEKDSKDGVKGKDVK). 2 coiled-coil regions span residues 664-767 (KAVE…ANHK) and 794-970 (EALL…MEMS). An RING-type zinc finger spans residues 991–1030 (CPSCKVKRKDAVLSKCFHVFCYDCLRTRYETRQRKCPKCN).

It belongs to the BRE1 family.

It localises to the nucleus. It carries out the reaction S-ubiquitinyl-[E2 ubiquitin-conjugating enzyme]-L-cysteine + [acceptor protein]-L-lysine = [E2 ubiquitin-conjugating enzyme]-L-cysteine + N(6)-ubiquitinyl-[acceptor protein]-L-lysine.. Its pathway is protein modification; protein ubiquitination. Its function is as follows. E3 ubiquitin-protein ligase that mediates monoubiquitination of 'Lys-117' of histone H2B. H2B 'Lys-117' ubiquitination gives a specific tag for epigenetic transcriptional activation and is also prerequisite for histone H3 'Lys-4' and 'Lys-79' methylation. It thereby plays a central role in histone code and gene regulation. Required for the expression of Notch target genes in development by affecting the levels of Su(H) in imaginal disk cells and stimulating the Su(H)-mediated transcription of Notch-specific genes. In Drosophila melanogaster (Fruit fly), this protein is E3 ubiquitin-protein ligase Bre1 (Bre1).